We begin with the raw amino-acid sequence, 577 residues long: BAG family molecular chaperone regulator 3 (577 aa).

Polar residues predominate over residues 1–17; it reads MSAATQSPMMQMASGNG. Disordered regions lie at residues 1-81, 126-207, and 229-427; these read MSAA…LLPI, TEAA…SHQL, and PSFH…HPGV. Ser-2 bears the N-acetylserine mark. WW domains are found at residues 22-56 and 126-157; these read DPLP…DPRV and TEAA…CGQM. Phosphoserine is present on Ser-138. Residue Arg-141 is modified to Omega-N-methylarginine. Over residues 158–204 the composition is skewed to low complexity; it reads PATATTAAAQPPTAHGPERSQSPAASDCSSSSSSASLPSSGRSSLGS. Ser-179 and Ser-204 each carry phosphoserine. Positions 256–265 are enriched in basic and acidic residues; it reads IQGDDWEPRP. At Arg-267 the chain carries Omega-N-methylarginine. Phosphoserine is present on residues Ser-280, Ser-281, and Ser-285. Thr-291 carries the post-translational modification Phosphothreonine. The residue at position 297 (Ser-297) is a Phosphoserine. Pro residues-rich tracts occupy residues 332 to 341 and 376 to 392; these read PAGPDLPPGH and IPCP…PSPP. Residues Ser-380, Ser-382, and Ser-390 each carry the phosphoserine modification. The 78-residue stretch at 426-503 folds into the BAG domain; that stretch reads GVLKVEAILE…TILEKLEQKA (78 aa). Residue Lys-450 forms a Glycyl lysine isopeptide (Lys-Gly) (interchain with G-Cter in SUMO1); alternate linkage. Lys-450 participates in a covalent cross-link: Glycyl lysine isopeptide (Lys-Gly) (interchain with G-Cter in SUMO2); alternate. Positions 524-577 are disordered; it reads QPLQEIMGAVVADKDKKGPENKDPQTESQQLEAKAATPPNPSNPADSAGNLVAP. Over residues 535–548 the composition is skewed to basic and acidic residues; that stretch reads ADKDKKGPENKDPQ.

Forms a ternary complex with HSPA1A/HSP70 and HSPB8, serving as scaffold subunit. Component of the chaperone-assisted selective autophagy (CASA) complex consisting of BAG3, HSPA8/HSC70, HSPB8 and STUB1/CHIP. Binds to the ATPase domain of HSP70 chaperones. Interacts with BCL2. Interacts with phospholipase C-gamma proteins. Interacts with DNAJB1 and DNAJB6. Interacts (via BAG domain) with HSF1; this interaction occurs in normal and heat-shocked cells. Interacts with HSPA8/HSC70 (via NBD), HSPA1A (via NBD) and HSPA1B (via NBD). Interacts (via WW domain 1) with SYNPO2 (via PPPY motif). Interacts with HSPB8.

Its subcellular location is the nucleus. The protein resides in the cytoplasm. Functionally, co-chaperone and adapter protein that connects different classes of molecular chaperones including heat shock proteins 70 (HSP70s), e.g. HSPA1A/HSP70 or HSPA8/HSC70, and small heat shock proteins (sHSPs), e.g. HSPB8. Acts as a nucleotide-exchange factor (NEF) promoting the release of ADP from HSP70s, thereby triggering client protein release. Nucleotide release is mediated via BAG3 binding to the nucleotide-binding domain (NBD) of HSP70s, whereas client release is mediated via its binding to the substrate-binding domain (SBD). Has anti-apoptotic activity. Plays a role in the HSF1 nucleocytoplasmic transport. This Mus musculus (Mouse) protein is BAG family molecular chaperone regulator 3 (Bag3).